The sequence spans 356 residues: Histidinol-phosphate aminotransferase (356 aa).

Lys214 bears the N6-(pyridoxal phosphate)lysine mark.

It belongs to the class-II pyridoxal-phosphate-dependent aminotransferase family. Histidinol-phosphate aminotransferase subfamily. In terms of assembly, homodimer. Pyridoxal 5'-phosphate serves as cofactor.

The catalysed reaction is L-histidinol phosphate + 2-oxoglutarate = 3-(imidazol-4-yl)-2-oxopropyl phosphate + L-glutamate. The protein operates within amino-acid biosynthesis; L-histidine biosynthesis; L-histidine from 5-phospho-alpha-D-ribose 1-diphosphate: step 7/9. The chain is Histidinol-phosphate aminotransferase from Escherichia coli O1:K1 / APEC.